Consider the following 138-residue polypeptide: Cysteine desulfuration protein SufE (138 aa).

The active-site Cysteine persulfide intermediate is the cysteine 51.

Belongs to the SufE family. As to quaternary structure, homodimer. Interacts with SufS.

The protein resides in the cytoplasm. Its pathway is cofactor biosynthesis; iron-sulfur cluster biosynthesis. Functionally, participates in cysteine desulfuration mediated by SufS. Cysteine desulfuration mobilizes sulfur from L-cysteine to yield L-alanine and constitutes an essential step in sulfur metabolism for biosynthesis of a variety of sulfur-containing biomolecules. Functions as a sulfur acceptor for SufS, by mediating the direct transfer of the sulfur atom from the S-sulfanylcysteine of SufS, an intermediate product of cysteine desulfuration process. This Shigella flexneri serotype 5b (strain 8401) protein is Cysteine desulfuration protein SufE.